Reading from the N-terminus, the 288-residue chain is MQQSTLLKPVSCYGIGVHSGKRTQLTIEPAKENTGIIFIRTDISSENNYIEASYFNVSDTLLSTTISNDHKVQISTIEHLMAALWGCSIDNAIIKIDGPEVPIMDGSSKPFVFMIECAGKKLQNAPKKYLKILKDIKVVHKDCELYCTPSDHMTVDLTIDFSSKAIGRQNLSFRDQESFTKNIADARTFGFIRDVDYLKSKGLAQGASFENAIGIDEQDKILNPNGLRYEDEFVRHKLLDLFGDLYTNGTSIVSAIKGYKTSHALNNELLHRIFSDTTSYKFVTSSEL.

Zn(2+) contacts are provided by His79, His236, and Asp240. His263 (proton donor) is an active-site residue.

The protein belongs to the LpxC family. Zn(2+) is required as a cofactor.

It catalyses the reaction a UDP-3-O-[(3R)-3-hydroxyacyl]-N-acetyl-alpha-D-glucosamine + H2O = a UDP-3-O-[(3R)-3-hydroxyacyl]-alpha-D-glucosamine + acetate. It functions in the pathway glycolipid biosynthesis; lipid IV(A) biosynthesis; lipid IV(A) from (3R)-3-hydroxytetradecanoyl-[acyl-carrier-protein] and UDP-N-acetyl-alpha-D-glucosamine: step 2/6. Functionally, catalyzes the hydrolysis of UDP-3-O-myristoyl-N-acetylglucosamine to form UDP-3-O-myristoylglucosamine and acetate, the committed step in lipid A biosynthesis. In Rickettsia africae (strain ESF-5), this protein is UDP-3-O-acyl-N-acetylglucosamine deacetylase.